A 44-amino-acid chain; its full sequence is 2S seed storage albumin protein (44 aa).

2 disulfide bridges follow: Cys7/Cys42 and Cys19/Cys31.

It belongs to the 2S seed storage albumins family. In terms of assembly, the mature protein consists of a small and a large chain linked by 2 disulfide bonds.

In terms of biological role, this is a 2S seed storage protein. Has antifungal activity. Inhibits spore germination in H.sativum (IC(50)=62.5 ug/ml) and P.betae (IC(50)=62.5 ug/ml). Inhibits growth of H.sativum, V.albo-atrum and P.infestans. The sequence is that of 2S seed storage albumin protein from Taraxacum officinale (Common dandelion).